The following is a 701-amino-acid chain: MEKRGPKRRQEAAHLSCELCRERKVKCDKLDPCTNCSSAGVICVPVRRPRLPRGAHAQRLRRISPEDPEAPIQIDIAPPADAGTIADDDLKERIRRLEALVDSMRSSNHISKQLIKNFQTNKDQEAQDTIESTLNGIDEDSLLIKGPRVHPSDGGLRILGLSGSSSPETGWASIIEDREISMQLCQVYLLNVDPVIKILHRPSLEKWMLQGQRYLGLPEGHAAVESLGAAICYVAATSLTETQSWARFHTTKSSIVARARRACETTLEKSSPLLSPDVTTLQAFVLYLVARRSEDPSRAVWTLMAFAVRIAKALDLPRVTDDNFFDQQMRKRLWLAICLLDFQTSLSQPSEPLITVVEATSSFSPPRHINDSDFDPTTSHDIPDREGLTDTTFSLVSYHVQAAGRLLNFEPCVKDDGSRQQHVQHFEQRTLRLLLYCDPESTPYAWFTWHRIQCFVSGARLSAIRPLLHQHRDHPIPILDANEGTSILSLALNILEKVQLVHTDPRGERFRWFVTVPWQPLAIAISECYICQDRSLVQRAWPIVEAAFQQHEAAVSGSSKAISITLERLMCRVRGKLLPSLGTSTSITTSPTFGTTDAANALSVPHTPPSRSSIISNGDLLSNWSWTTAELSRPGEELALVTEAPVSTSPQKVDPLLLSLDSPLLIAGQEQLVEADQSWAAWEERIAIGEEERRQEKKEKH.

The zn(2)-C6 fungal-type DNA-binding region spans C17–C43.

It is found in the nucleus. Its function is as follows. Transcription factor that specifically regulates the neosartoricin B biosynthesis gene cluster. This is C6 finger domain transcription factor nscR from Arthroderma benhamiae (strain ATCC MYA-4681 / CBS 112371) (Trichophyton mentagrophytes).